Reading from the N-terminus, the 69-residue chain is Cold shock-like protein CspC (69 aa).

One can recognise a CSD domain in the interval 6–66 (GQVKWFNESK…GQKGPAAVNV (61 aa)).

It is found in the cytoplasm. The polypeptide is Cold shock-like protein CspC (cspC) (Shigella flexneri).